The following is a 288-amino-acid chain: Probable prolyl 4-hydroxylase 9 (288 aa).

Residues 1–12 (MKSRLKSYRRKK) are Cytoplasmic-facing. The helical; Signal-anchor for type II membrane protein transmembrane segment at 13–33 (LGLATVIVFCSLCFLFGFYGS) threads the bilayer. The Lumenal portion of the chain corresponds to 34–288 (TLLSQNVPRV…KWIRDQDQEE (255 aa)). Residues 164–283 (HGESFNILRY…KWVATKWIRD (120 aa)) form the Fe2OG dioxygenase domain. Residues histidine 182 and aspartate 184 each coordinate Fe cation. 2 N-linked (GlcNAc...) asparagine glycosylation sites follow: asparagine 221 and asparagine 255. Histidine 264 lines the Fe cation pocket. Lysine 274 is a 2-oxoglutarate binding site.

It belongs to the P4HA family. The cofactor is Fe(2+). Requires L-ascorbate as cofactor.

The protein resides in the endoplasmic reticulum membrane. It localises to the golgi apparatus. It catalyses the reaction L-prolyl-[collagen] + 2-oxoglutarate + O2 = trans-4-hydroxy-L-prolyl-[collagen] + succinate + CO2. In terms of biological role, catalyzes the post-translational formation of 4-hydroxyproline in -Xaa-Pro-Gly- sequences in proline-rich peptide sequences of plant glycoproteins and other proteins. Hydroxyprolines are important constituent of many plant cell wall glycoproteins such as extensins, hydroxyproline-rich glycoproteins, lectins and arabinogalactan proteins. The sequence is that of Probable prolyl 4-hydroxylase 9 from Arabidopsis thaliana (Mouse-ear cress).